The primary structure comprises 664 residues: MDNKLEKMKELVEELNQYAYEYYVLDNPSISDKEYDLKYDELVILEKKTEVTLPYSPTQRVGDKILGEFSKYTHKGRLWSLDKAQNMEQLIEWHNRNLKVIEQYNSMSEDKLPELRYIVTKKFDGLTVNCTYDENGILIKSATRGTGIIGEDITAQIKTIKTVPLKIKNSYVIEVHGEAIMTKTAFEEYNKAAQVPLKNLRNGAAGALRNLDIKETARRNLSAFFYDVGYNEGPEFKSYREMMNFIRNMGLPQDKYIKECTNMEEVEKEIEYIESIRGELDYDIDGAVIVVDDIKTREILGYTIKFPKWAIAYKFEAKEITTKLLDVEWNVGRSGRVTPTALLEPVELGGVTVKRATLNNMDDIKRKNVKLGAKVLVRRSNDVIPEIMGVVEESLEESEEIQAPDRCPYCNSHLVQNGVHYYCENTLSCKPQMVKSIVHFASREAMNIAGFSEKTAEQLFEKLDIKSIADLYKIKKEELLTLEKFKDKKSQNLIDAIQNSKNCDLASFIYALGIPNVGKKTANDLVMKFKTLESIKNTTIEQLVEVPDVGEIVAKSIYDFFEDEKIISNIEELLNLGVKPYYEEERIDENPFMDKTIVVTGSLNNYSRGEIKDKLQSLGAKVSSSVSKNTDYVLVGEKPGSKYEKAIELGVKVINEEEFSNKIK.

NAD(+) is bound by residues 32 to 36 (DKEYD) and 80 to 81 (SL). Lysine 122 (N6-AMP-lysine intermediate) is an active-site residue. NAD(+) is bound by residues arginine 144, glutamate 178, and lysine 314. Residues cysteine 407, cysteine 410, cysteine 423, and cysteine 429 each coordinate Zn(2+). A BRCT domain is found at 587 to 664 (IDENPFMDKT…NEEEFSNKIK (78 aa)).

It belongs to the NAD-dependent DNA ligase family. LigA subfamily. It depends on Mg(2+) as a cofactor. Mn(2+) is required as a cofactor.

The catalysed reaction is NAD(+) + (deoxyribonucleotide)n-3'-hydroxyl + 5'-phospho-(deoxyribonucleotide)m = (deoxyribonucleotide)n+m + AMP + beta-nicotinamide D-nucleotide.. Functionally, DNA ligase that catalyzes the formation of phosphodiester linkages between 5'-phosphoryl and 3'-hydroxyl groups in double-stranded DNA using NAD as a coenzyme and as the energy source for the reaction. It is essential for DNA replication and repair of damaged DNA. The protein is DNA ligase of Clostridium botulinum (strain Langeland / NCTC 10281 / Type F).